A 630-amino-acid polypeptide reads, in one-letter code: Protein mono-ADP-ribosyltransferase PARP6 (630 aa).

Residue Cys237 is modified to ADP-ribosylcysteine. The 227-residue stretch at 394 to 620 folds into the PARP catalytic domain; the sequence is EMTQGSYLEI…QDPKIQKEIM (227 aa). Asp600 carries the ADP-ribosyl aspartic acid modification.

Belongs to the ARTD/PARP family. Post-translationally, auto-mono-ADP-ribosylated.

It carries out the reaction L-aspartyl-[protein] + NAD(+) = 4-O-(ADP-D-ribosyl)-L-aspartyl-[protein] + nicotinamide. The enzyme catalyses L-cysteinyl-[protein] + NAD(+) = S-(ADP-D-ribosyl)-L-cysteinyl-[protein] + nicotinamide + H(+). Its function is as follows. Mono-ADP-ribosyltransferase that mediates mono-ADP-ribosylation of target proteins. The chain is Protein mono-ADP-ribosyltransferase PARP6 from Mus musculus (Mouse).